Reading from the N-terminus, the 491-residue chain is Aspartyl/glutamyl-tRNA(Asn/Gln) amidotransferase subunit B (491 aa).

The protein belongs to the GatB/GatE family. GatB subfamily. As to quaternary structure, heterotrimer of A, B and C subunits.

It catalyses the reaction L-glutamyl-tRNA(Gln) + L-glutamine + ATP + H2O = L-glutaminyl-tRNA(Gln) + L-glutamate + ADP + phosphate + H(+). The catalysed reaction is L-aspartyl-tRNA(Asn) + L-glutamine + ATP + H2O = L-asparaginyl-tRNA(Asn) + L-glutamate + ADP + phosphate + 2 H(+). In terms of biological role, allows the formation of correctly charged Asn-tRNA(Asn) or Gln-tRNA(Gln) through the transamidation of misacylated Asp-tRNA(Asn) or Glu-tRNA(Gln) in organisms which lack either or both of asparaginyl-tRNA or glutaminyl-tRNA synthetases. The reaction takes place in the presence of glutamine and ATP through an activated phospho-Asp-tRNA(Asn) or phospho-Glu-tRNA(Gln). The chain is Aspartyl/glutamyl-tRNA(Asn/Gln) amidotransferase subunit B from Burkholderia multivorans (strain ATCC 17616 / 249).